The primary structure comprises 634 residues: 1-deoxy-D-xylulose-5-phosphate synthase (634 aa).

Thiamine diphosphate contacts are provided by residues histidine 74 and 115 to 117 (AHS). Aspartate 146 provides a ligand contact to Mg(2+). Residues 147–148 (GA), asparagine 176, tyrosine 283, and glutamate 365 contribute to the thiamine diphosphate site. Asparagine 176 contributes to the Mg(2+) binding site.

Belongs to the transketolase family. DXPS subfamily. Homodimer. It depends on Mg(2+) as a cofactor. The cofactor is thiamine diphosphate.

It carries out the reaction D-glyceraldehyde 3-phosphate + pyruvate + H(+) = 1-deoxy-D-xylulose 5-phosphate + CO2. The protein operates within metabolic intermediate biosynthesis; 1-deoxy-D-xylulose 5-phosphate biosynthesis; 1-deoxy-D-xylulose 5-phosphate from D-glyceraldehyde 3-phosphate and pyruvate: step 1/1. Functionally, catalyzes the acyloin condensation reaction between C atoms 2 and 3 of pyruvate and glyceraldehyde 3-phosphate to yield 1-deoxy-D-xylulose-5-phosphate (DXP). The sequence is that of 1-deoxy-D-xylulose-5-phosphate synthase from Burkholderia pseudomallei (strain 668).